The sequence spans 140 residues: ATP synthase epsilon chain (140 aa).

The protein belongs to the ATPase epsilon chain family. As to quaternary structure, F-type ATPases have 2 components, CF(1) - the catalytic core - and CF(0) - the membrane proton channel. CF(1) has five subunits: alpha(3), beta(3), gamma(1), delta(1), epsilon(1). CF(0) has three main subunits: a, b and c.

It localises to the cell inner membrane. In terms of biological role, produces ATP from ADP in the presence of a proton gradient across the membrane. This chain is ATP synthase epsilon chain, found in Xanthomonas axonopodis pv. citri (strain 306).